Reading from the N-terminus, the 222-residue chain is Pectate lyase A (222 aa).

Residues 1–26 (MKKMLTLLLSAGLVASIFGVMPAAAA) form the signal peptide.

It belongs to the polysaccharide lyase 3 family. It depends on Ca(2+) as a cofactor.

It is found in the secreted. The enzyme catalyses Eliminative cleavage of (1-&gt;4)-alpha-D-galacturonan to give oligosaccharides with 4-deoxy-alpha-D-galact-4-enuronosyl groups at their non-reducing ends.. It carries out the reaction Eliminative cleavage of (1-&gt;4)-alpha-D-galacturonan methyl ester to give oligosaccharides with 4-deoxy-6-O-methyl-alpha-D-galact-4-enuronosyl groups at their non-reducing ends.. The protein operates within glycan metabolism; pectin degradation. Catalyzes the depolymerization of both polygalacturonate and pectins with low (20-34%) and high (90%) levels of methyl esterification, with an endo mode of action. In contrast to the majority of pectate lyases, displays high activity on highly methylated pectins. Does not show xylanase and cellulase activity. The protein is Pectate lyase A of Paenibacillus amylolyticus.